Reading from the N-terminus, the 320-residue chain is Cytochrome f (320 aa).

The first 35 residues, 1–35, serve as a signal peptide directing secretion; it reads MNFFTHKKNNFGSFVTIFSFLVALGVTNLTPAAEA. 4 residues coordinate heme: tyrosine 36, cysteine 56, cysteine 59, and histidine 60. A helical transmembrane segment spans residues 286 to 306; the sequence is IQGLLVFFATVLFAQVLLVLK.

It belongs to the cytochrome f family. In terms of assembly, the 4 large subunits of the cytochrome b6-f complex are cytochrome b6, subunit IV (17 kDa polypeptide, petD), cytochrome f and the Rieske protein, while the 4 small subunits are PetG, PetL, PetM and PetN. The complex functions as a dimer. Heme is required as a cofactor.

It is found in the plastid. Its subcellular location is the chloroplast thylakoid membrane. Functionally, component of the cytochrome b6-f complex, which mediates electron transfer between photosystem II (PSII) and photosystem I (PSI), cyclic electron flow around PSI, and state transitions. This chain is Cytochrome f, found in Tetradesmus obliquus (Green alga).